Reading from the N-terminus, the 124-residue chain is Small ribosomal subunit protein uS12 (124 aa).

At Asp89 the chain carries 3-methylthioaspartic acid.

This sequence belongs to the universal ribosomal protein uS12 family. As to quaternary structure, part of the 30S ribosomal subunit. Contacts proteins S8 and S17. May interact with IF1 in the 30S initiation complex.

With S4 and S5 plays an important role in translational accuracy. In terms of biological role, interacts with and stabilizes bases of the 16S rRNA that are involved in tRNA selection in the A site and with the mRNA backbone. Located at the interface of the 30S and 50S subunits, it traverses the body of the 30S subunit contacting proteins on the other side and probably holding the rRNA structure together. The combined cluster of proteins S8, S12 and S17 appears to hold together the shoulder and platform of the 30S subunit. The protein is Small ribosomal subunit protein uS12 of Baumannia cicadellinicola subsp. Homalodisca coagulata.